A 496-amino-acid polypeptide reads, in one-letter code: Galactose-1-phosphate uridylyltransferase (496 aa).

The protein belongs to the galactose-1-phosphate uridylyltransferase type 2 family.

The protein resides in the cytoplasm. The enzyme catalyses alpha-D-galactose 1-phosphate + UDP-alpha-D-glucose = alpha-D-glucose 1-phosphate + UDP-alpha-D-galactose. Its pathway is carbohydrate metabolism; galactose metabolism. This is Galactose-1-phosphate uridylyltransferase from Staphylococcus saprophyticus subsp. saprophyticus (strain ATCC 15305 / DSM 20229 / NCIMB 8711 / NCTC 7292 / S-41).